We begin with the raw amino-acid sequence, 543 residues long: MWKLEKKYILRQNPSVFLNGTAFWTPHPQNILHIDRNSLRETKKNASLYRTRLLNLETEQIKKAMINYELDKLMQDHVKRSSIITRDLEIIENMVEKFQDSPQLLPSPPKPLSPTTQSQPTNFKTNVYTITVAPGDPGFTVESNFKIELVSSLYTNQQQWLPSYGPWYSSLTDIAMQRRVFPKELRGTLNYQNSTSLKLMHAVLTTISSATDDFYSDVRHISDTSSALVILNAYFCLKTSAPIPVTYEELLNNLEAKLGMFVFDLKNHTGGNGFSFSPQVNEATSSIAPPNKDTKYSQHFFSSHKIYSLLEASGLLSTKSHEINPKTDVIYTITTEIFGEDIPPMASFQWNLRVGIIAIEVFVITYLLLETSQISIHSTHRRLNLSTLLGSKFKKSSTGLLNQIVYKKGQVFSFLNKNYIVPTLTHNKNVPTSFLFPGVTLIALESLATTAVDKPFINLTGNRFQDIFEIINQKFTFKDPVSLMAAQTALRFKVEHGLSNILTNLSPTTFATEIIRRQFGGEDDYDTLYFIVLGCLPIAWAAV.

The interaction with major capsid protein/MCP stretch occupies residues 1–54; the sequence is MWKLEKKYILRQNPSVFLNGTAFWTPHPQNILHIDRNSLRETKKNASLYRTRLL. Positions 101–120 are disordered; the sequence is SPQLLPSPPKPLSPTTQSQP.

This sequence belongs to the herpesviridae CVC2 protein family. Heterodimerizes with CVC1. Interacts with major capsid protein/MCP and triplex capsid protein 1/TRX1 at the pentamer vertices. Interacts with the large tegument protein/LTP.

The protein localises to the virion. It is found in the host nucleus. Capsid vertex-specific component that plays a role during viral DNA encapsidation, assuring correct genome cleavage and presumably stabilizing capsids that contain full-length viral genomes. Participates in the interaction between the capsid and the tegument through interaction with the large tegument protein/LTP. This chain is Capsid vertex component 2, found in Saimiri sciureus (Common squirrel monkey).